The following is a 25-amino-acid chain: Omega-conotoxin MVIIB (25 aa).

Intrachain disulfides connect Cys1-Cys16, Cys8-Cys20, and Cys15-Cys25. Cys25 carries the post-translational modification Cysteine amide.

This sequence belongs to the conotoxin O1 superfamily. Expressed by the venom duct.

It localises to the secreted. Omega-conotoxins act at presynaptic membranes, they bind and block voltage-gated calcium channels (Cav). This is Omega-conotoxin MVIIB from Conus magus (Magical cone).